We begin with the raw amino-acid sequence, 697 residues long: Glycine--tRNA ligase beta subunit (697 aa).

The protein belongs to the class-II aminoacyl-tRNA synthetase family. In terms of assembly, tetramer of two alpha and two beta subunits.

The protein resides in the cytoplasm. The catalysed reaction is tRNA(Gly) + glycine + ATP = glycyl-tRNA(Gly) + AMP + diphosphate. The sequence is that of Glycine--tRNA ligase beta subunit from Solidesulfovibrio magneticus (strain ATCC 700980 / DSM 13731 / RS-1) (Desulfovibrio magneticus).